Reading from the N-terminus, the 197-residue chain is Putative ankyrin repeat protein R875 (197 aa).

ANK repeat units lie at residues 78–106 (LNKC…DIRE), 107–136 (NDDC…DIRA), 138–166 (DDDA…NFRK), and 168–196 (NDYE…VLHE).

This Acanthamoeba polyphaga mimivirus (APMV) protein is Putative ankyrin repeat protein R875.